The sequence spans 117 residues: Large ribosomal subunit protein uL18 (117 aa).

This sequence belongs to the universal ribosomal protein uL18 family. In terms of assembly, part of the 50S ribosomal subunit; part of the 5S rRNA/L5/L18/L25 subcomplex. Contacts the 5S and 23S rRNAs.

Its function is as follows. This is one of the proteins that bind and probably mediate the attachment of the 5S RNA into the large ribosomal subunit, where it forms part of the central protuberance. This is Large ribosomal subunit protein uL18 from Vibrio vulnificus (strain CMCP6).